The primary structure comprises 303 residues: ATP synthase subunit a (303 aa).

Transmembrane regions (helical) follow at residues His59–Asn79, Phe122–Met142, Asn148–Ile168, Thr181–Phe201, Ile220–Val240, and Phe244–Ala264. Residues His281 to Glu290 are compositionally biased toward basic and acidic residues. Residues His281 to Ala303 are disordered.

This sequence belongs to the ATPase A chain family. F-type ATPases have 2 components, CF(1) - the catalytic core - and CF(0) - the membrane proton channel. CF(1) has five subunits: alpha(3), beta(3), gamma(1), delta(1), epsilon(1). CF(0) has three main subunits: a(1), b(2) and c(9-12). The alpha and beta chains form an alternating ring which encloses part of the gamma chain. CF(1) is attached to CF(0) by a central stalk formed by the gamma and epsilon chains, while a peripheral stalk is formed by the delta and b chains.

It is found in the cell inner membrane. Functionally, key component of the proton channel; it plays a direct role in the translocation of protons across the membrane. This chain is ATP synthase subunit a, found in Myxococcus xanthus (strain DK1622).